The following is a 111-amino-acid chain: uncharacterized protein (111 aa).

Gly2 is lipidated: N-myristoyl glycine; by host.

This is an uncharacterized protein from Acanthamoeba polyphaga mimivirus (APMV).